A 513-amino-acid polypeptide reads, in one-letter code: GMP synthase [glutamine-hydrolyzing] (513 aa).

In terms of domain architecture, Glutamine amidotransferase type-1 spans 9–198; sequence LILVLDFGSQ…VRRVCNCTGE (190 aa). Cysteine 86 serves as the catalytic Nucleophile. Residues histidine 172 and glutamate 174 contribute to the active site. One can recognise a GMPS ATP-PPase domain in the interval 199-388; it reads WTMENFIEIE…LGIPEHLVWR (190 aa). ATP is bound at residue 226–232; the sequence is SGGVDSS.

In terms of assembly, homodimer.

The catalysed reaction is XMP + L-glutamine + ATP + H2O = GMP + L-glutamate + AMP + diphosphate + 2 H(+). The protein operates within purine metabolism; GMP biosynthesis; GMP from XMP (L-Gln route): step 1/1. Functionally, catalyzes the synthesis of GMP from XMP. This is GMP synthase [glutamine-hydrolyzing] from Staphylococcus epidermidis (strain ATCC 12228 / FDA PCI 1200).